Here is a 268-residue protein sequence, read N- to C-terminus: Centromere protein Q (268 aa).

The tract at residues 1-80 is disordered; sequence MSGKANASKK…KTWQPLSKST (80 aa). Residues Ser-31 and Ser-50 each carry the phosphoserine modification. Basic residues predominate over residues 58–72; sequence TNLKHGKTAASKRKT. Residues 170 to 206 are a coiled coil; the sequence is ELMTGNIQSLKNKIQILASEVEEEEERVKQMHQINSS. The residue at position 249 (Ser-249) is a Phosphoserine.

It belongs to the CENP-Q/OKP1 family. As to quaternary structure, component of the CENPA-CAD complex, composed of CENPI, CENPK, CENPL, CENPO, CENPP, CENPQ, CENPR and CENPS. The CENPA-CAD complex interacts with the CENPA-NAC complex, at least composed of CENPA, CENPC, CENPH, CENPM, CENPN, CENPT and CENPU. Phosphorylation at Ser-50 is essential for CENPE recruitment to kinetochores and orderly chromosome congression.

The protein localises to the nucleus. Its subcellular location is the chromosome. It localises to the centromere. Component of the CENPA-CAD (nucleosome distal) complex, a complex recruited to centromeres which is involved in assembly of kinetochore proteins, mitotic progression and chromosome segregation. May be involved in incorporation of newly synthesized CENPA into centromeres via its interaction with the CENPA-NAC complex. Plays an important role in chromosome congression and in the recruitment of CENP-O complex (which comprises CENPO, CENPP, CENPQ and CENPU), CENPE and PLK1 to the kinetochores. This Homo sapiens (Human) protein is Centromere protein Q (CENPQ).